A 168-amino-acid polypeptide reads, in one-letter code: Transmembrane protein 229b (168 aa).

At 1-14 (MAPPEPLTALSRWY) the chain is on the cytoplasmic side. The helical transmembrane segment at 15–35 (LYAIHGYFCEVMFTAAWDFVV) threads the bilayer. Over 36 to 40 (NYNWK) the chain is Extracellular. The helical transmembrane segment at 41–61 (FPGVTSVWALFIYGTSILIVE) threads the bilayer. The Cytoplasmic segment spans residues 62 to 72 (KMYLYLKDKCN). The chain crosses the membrane as a helical span at residues 73 to 93 (ILIRCLIYTLWTYIWEFSTGL). The Extracellular segment spans residues 94-109 (ILRQFNACPWDYSQFD). A helical membrane pass occupies residues 110-130 (FDFMGLITLEYAIPWFCASFI). The Cytoplasmic portion of the chain corresponds to 131–168 (MEQLVIRNTLRLRFDEHAEPGSPVMSTVSMANGHVKCN).

This sequence belongs to the TMEM229 family.

It is found in the membrane. In Xenopus tropicalis (Western clawed frog), this protein is Transmembrane protein 229b (tmem229b).